The sequence spans 435 residues: E3 ubiquitin-protein ligase itt1 (435 aa).

Positions 16–135 constitute an RWD domain; sequence DELIALQSIY…EHVRSIATIA (120 aa). Positions 170–420 are TRIAD supradomain; that stretch reads RKFQCNVCFD…DPVSSCYGML (251 aa). The Zn(2+) site is built by C174, C177, C192, H194, C197, C200, C219, C224, C266, C271, C286, C289, C294, C297, H302, C308, C368, and C371. An RING-type 1 zinc finger spans residues 174–224; sequence CNVCFDEFNGTDCFQLTRCGHVSCQSCLRDYYTMCIQEGMFSQIKCIDLDC. The segment at 245–308 adopts an IBR-type zinc-finger fold; the sequence is TNRYKELEEK…ATWHGDLSPC (64 aa). The segment at 368–396 adopts an RING-type 2; atypical zinc-finger fold; sequence CPTCDRVVERIDGCCHMNCLCGTHFCFLC. Residue C381 is part of the active site. The Zn(2+) site is built by C386, C388, C393, C396, H408, and C416.

The protein belongs to the RBR family. RNF14 subfamily.

It localises to the cytoplasm. The protein resides in the nucleus. The enzyme catalyses [E2 ubiquitin-conjugating enzyme]-S-ubiquitinyl-L-cysteine + [acceptor protein]-L-lysine = [E2 ubiquitin-conjugating enzyme]-L-cysteine + [acceptor protein]-N(6)-ubiquitinyl-L-lysine.. Its pathway is protein modification; protein ubiquitination. Its function is as follows. E3 ubiquitin-protein ligase involved in the rescue of stalled ribosomes by promoting ubiquitination and degradation of proteins on stalled ribosomes. Specifically required to resolve RNA-protein cross-links caused by reactive aldehydes, which trigger translation stress by stalling ribosomes: acts by catalying 'Lys-6'-linked ubiquitination of RNA-protein cross-links, leading to their degradation. This Schizosaccharomyces pombe (strain 972 / ATCC 24843) (Fission yeast) protein is E3 ubiquitin-protein ligase itt1 (itt1).